Consider the following 519-residue polypeptide: Protein nucleotidyltransferase YdiU (519 aa).

ATP contacts are provided by Gly-100, Gly-102, Arg-103, Lys-123, Asp-135, Gly-136, Arg-193, and Arg-200. Catalysis depends on Asp-270, which acts as the Proton acceptor. The Mg(2+) site is built by Asn-271 and Asp-280. Residue Asp-280 participates in ATP binding.

Belongs to the SELO family. Mg(2+) is required as a cofactor. The cofactor is Mn(2+).

The enzyme catalyses L-seryl-[protein] + ATP = 3-O-(5'-adenylyl)-L-seryl-[protein] + diphosphate. It catalyses the reaction L-threonyl-[protein] + ATP = 3-O-(5'-adenylyl)-L-threonyl-[protein] + diphosphate. The catalysed reaction is L-tyrosyl-[protein] + ATP = O-(5'-adenylyl)-L-tyrosyl-[protein] + diphosphate. It carries out the reaction L-histidyl-[protein] + UTP = N(tele)-(5'-uridylyl)-L-histidyl-[protein] + diphosphate. The enzyme catalyses L-seryl-[protein] + UTP = O-(5'-uridylyl)-L-seryl-[protein] + diphosphate. It catalyses the reaction L-tyrosyl-[protein] + UTP = O-(5'-uridylyl)-L-tyrosyl-[protein] + diphosphate. Nucleotidyltransferase involved in the post-translational modification of proteins. It can catalyze the addition of adenosine monophosphate (AMP) or uridine monophosphate (UMP) to a protein, resulting in modifications known as AMPylation and UMPylation. The polypeptide is Protein nucleotidyltransferase YdiU (Xylella fastidiosa (strain 9a5c)).